Consider the following 219-residue polypeptide: Transmembrane protein 179B (219 aa).

The next 4 membrane-spanning stretches (helical) occupy residues 6-26, 69-89, 105-125, and 167-187; these read PLLLELLLYGSCFICGIITAA, ISVCVAVFCFSLTLYWIYIAF, LGLSGVFLFFLLVTGCILKIG, and AETAVWVNFFFWMIIVVLVLI. The disordered stretch occupies residues 195-219; the sequence is IRPGTEDPSAPPSETEPFFNRPGRP.

It belongs to the TMEM179 family.

The protein resides in the membrane. This Danio rerio (Zebrafish) protein is Transmembrane protein 179B (tmem179b).